A 437-amino-acid chain; its full sequence is Serine carboxypeptidase-like 7 (437 aa).

The first 25 residues, 1–25, serve as a signal peptide directing secretion; the sequence is MANDYVSTVLLLLSLLIFLSQRTDS. 3 disulfide bridges follow: cysteine 84/cysteine 327, cysteine 248/cysteine 262, and cysteine 286/cysteine 293. N-linked (GlcNAc...) asparagine glycosylation is present at asparagine 105. Serine 180 is a catalytic residue. The N-linked (GlcNAc...) asparagine glycan is linked to asparagine 346. Residue aspartate 362 is part of the active site. A glycan (N-linked (GlcNAc...) asparagine) is linked at asparagine 378. Residue histidine 415 is part of the active site.

The protein belongs to the peptidase S10 family. Ubiquitous.

The protein localises to the secreted. In terms of biological role, probable carboxypeptidase. This chain is Serine carboxypeptidase-like 7 (SCPL7), found in Arabidopsis thaliana (Mouse-ear cress).